Here is a 1522-residue protein sequence, read N- to C-terminus: Lysine-specific demethylase 5B (1522 aa).

Residues C10–P51 enclose the JmjN domain. The 91-residue stretch at T75–S165 folds into the ARID domain. Positions D180–P192 are enriched in basic and acidic residues. The interval D180–R229 is disordered. A PHD-type 1 zinc finger spans residues L284–Q334. Position 400 (Y400) interacts with 2-oxoglutarate. The region spanning E428–R594 is the JmjC domain. Residues H474 and E476 each coordinate Fe cation. S482, N484, and K492 together coordinate 2-oxoglutarate. H562 is a binding site for Fe cation. The segment at C667 to M719 adopts a C5HC2 zinc-finger fold. The PHD-type 2 zinc-finger motif lies at L1151–S1199. The span at L1353 to N1365 shows a compositional bias: polar residues. Disordered regions lie at residues L1353–G1373 and A1400–D1460. A compositionally biased stretch (basic residues) spans A1400–S1416. The segment covering R1426 to E1442 has biased composition (basic and acidic residues). The segment at D1462–K1516 adopts a PHD-type 3 zinc-finger fold.

The protein belongs to the JARID1 histone demethylase family. The cofactor is Fe(2+).

Its subcellular location is the nucleus. It catalyses the reaction N(6),N(6),N(6)-trimethyl-L-lysyl(4)-[histone H3] + 3 2-oxoglutarate + 3 O2 = L-lysyl(4)-[histone H3] + 3 formaldehyde + 3 succinate + 3 CO2. In terms of biological role, histone demethylase that demethylates 'Lys-4' of histone H3, thereby playing a central role in histone code. Does not demethylate histone H3 'Lys-9' or H3 'Lys-27'. Demethylates trimethylated, dimethylated and monomethylated H3 'Lys-4'. Acts as a transcriptional corepressor. May repress the CLOCK-BMAL1 heterodimer-mediated transcriptional activation of the core clock component PER2. This Gallus gallus (Chicken) protein is Lysine-specific demethylase 5B (KDM5B).